A 393-amino-acid polypeptide reads, in one-letter code: CCA-adding enzyme (393 aa).

ATP contacts are provided by Gly-27 and Arg-30. The CTP site is built by Gly-27 and Arg-30. Residues Asp-40 and Asp-42 each contribute to the Mg(2+) site. Arg-111, Asp-154, Arg-157, Arg-160, and Arg-163 together coordinate ATP. 5 residues coordinate CTP: Arg-111, Asp-154, Arg-157, Arg-160, and Arg-163.

This sequence belongs to the tRNA nucleotidyltransferase/poly(A) polymerase family. Bacterial CCA-adding enzyme type 3 subfamily. As to quaternary structure, homodimer. The cofactor is Mg(2+).

It catalyses the reaction a tRNA precursor + 2 CTP + ATP = a tRNA with a 3' CCA end + 3 diphosphate. The enzyme catalyses a tRNA with a 3' CCA end + 2 CTP + ATP = a tRNA with a 3' CCACCA end + 3 diphosphate. Functionally, catalyzes the addition and repair of the essential 3'-terminal CCA sequence in tRNAs without using a nucleic acid template. Adds these three nucleotides in the order of C, C, and A to the tRNA nucleotide-73, using CTP and ATP as substrates and producing inorganic pyrophosphate. tRNA 3'-terminal CCA addition is required both for tRNA processing and repair. Also involved in tRNA surveillance by mediating tandem CCA addition to generate a CCACCA at the 3' terminus of unstable tRNAs. While stable tRNAs receive only 3'-terminal CCA, unstable tRNAs are marked with CCACCA and rapidly degraded. The sequence is that of CCA-adding enzyme from Listeria monocytogenes serotype 4a (strain HCC23).